Reading from the N-terminus, the 1513-residue chain is Protein tincar (1513 aa).

The Cytoplasmic portion of the chain corresponds to 1–77; the sequence is MGGKHQGSGA…DSGSYLHLNS (77 aa). Residues 78-98 traverse the membrane as a helical segment; sequence LWSIWYGVMLTLFQGYLAMHG. The Extracellular segment spans residues 99–120; that stretch reads AYRFLGCSLIPWKIEPVAELNL. The helical transmembrane segment at 121-141 threads the bilayer; sequence QIVLSGVVFILLPVFFTSAVF. Over 142–181 the chain is Cytoplasmic; it reads KVGNLANDGIKLATGARERRCTLSPHDGLEEESRGGTLRA. A helical transmembrane segment spans residues 182-202; it reads LWTHGGPTAAFVHIVIALCLL. Residues 203 to 668 are Extracellular-facing; that stretch reads LPRLLLEARI…VAIFSQPPSA (466 aa). 3 disordered regions span residues 247 to 266, 354 to 373, and 383 to 532; these read TPFPRHHQPSNQQQSHHQHG, ERQELEEAIRGEEDDGDEGV, and MPDF…SIHR. Over residues 427 to 466 the composition is skewed to low complexity; sequence ASSSSSSTTSTTTTTTTSTTTTAATTTSTRGTSTTTTTTT. Over residues 478–507 the composition is skewed to basic residues; it reads SAHHHHGKSRKHHKHHNKQRQQQPPRRHHV. Residues 523–532 are compositionally biased toward basic and acidic residues; it reads TTTRDSSIHR. The helical transmembrane segment at 669-689 threads the bilayer; the sequence is EFVNLLCALLVWSVRYPAVFW. Topologically, residues 690-696 are cytoplasmic; sequence NTSKAFA. The helical transmembrane segment at 697 to 717 threads the bilayer; it reads CVFSLQMVVAALDIILGYVGI. The Extracellular portion of the chain corresponds to 718–736; that stretch reads SNLYKLQIYAEAMPVHQPG. Residues 737–757 form a helical membrane-spanning segment; it reads LILNAVVTLALYLLSTALVLA. Residues 758 to 787 are Cytoplasmic-facing; it reads SSMVMYLYGHGRLATRMRDRSIITLKTHQT. The chain crosses the membrane as a helical span at residues 788–808; sequence WIYFAHCASLCFVLALAVVKA. The Extracellular segment spans residues 809 to 826; that stretch reads PLLNDLSATYKNNLHCPT. The helical transmembrane segment at 827–847 threads the bilayer; the sequence is FLAALVGVTHLLLWIVIWLCL. The Cytoplasmic portion of the chain corresponds to 848–1513; sequence TIKRRWHFKL…CGLYVTAQLH (666 aa). 2 stretches are compositionally biased toward low complexity: residues 879–903 and 1060–1071; these read SSGQRTGSNSSSSGCNSTSTTVNGG and QQQQQQQQQQRQ. Disordered regions lie at residues 879-913, 1045-1090, 1115-1155, 1173-1214, and 1231-1335; these read SSGQRTGSNSSSSGCNSTSTTVNGGDSKPDMMSTA, EYDE…SGLG, ASTS…HSAG, EHHH…PHQH, and AHIA…DPAA. Pro residues predominate over residues 1122-1149; sequence PPQPSAQAPPPPPPLPIKGAPVPQPPAV. 2 stretches are compositionally biased toward low complexity: residues 1179-1208 and 1255-1285; these read LQHSLQHPQHHPLQQQQQKQQTPQHPLQQQ and TPRSDTTSTTESTNTTSPPERAPSESSSGVH. The segment covering 1286-1296 has biased composition (basic and acidic residues); sequence SGEERELEVII. Pro residues predominate over residues 1303–1314; the sequence is KPPPRPPQPPIQ. The segment covering 1324–1335 has biased composition (polar residues); sequence MRMSSFNADPAA.

In terms of tissue distribution, expression varies in tissues throughout development. At stage 5, expressed in the embryo dorsal region followed by expression in a striped pattern at stage 6. During gastrulation, expressed in ventral region and ventral nerve cord. Also detected in many neurons in the externa sensilla and chordotonal organ. At stage 16, expressed on the surface of the midgut. Additionally, expressed in a subset of cardioblasts (Tin+ subpopulation) during dorsal vessel formation. In third-instar larval tissues, expressed in the eye and antennal disks. In the antennal disks, expressed in the second antennal segments. In the eye disks, strongest expression found in the ocelli, and in the differentiating ommatidial cells. Also expressed in all cells within and in the vicinity of the morphogenetic furrow.

The protein resides in the membrane. Its function is as follows. Involved in eye morphogenesis. May be essential for the normal differentiation of ommatidial cells. This Drosophila melanogaster (Fruit fly) protein is Protein tincar (tinc).